The following is a 489-amino-acid chain: Dipeptide and tripeptide permease B (489 aa).

At 1–27 (MNKPASIGLLQQPKPFFMIFFVELWER) the chain is on the cytoplasmic side. The helical transmembrane segment at 28-48 (FGYYGVQGILAVYFVHKLGFS) threads the bilayer. Over 49–52 (QEQA) the chain is Periplasmic. A helical transmembrane segment spans residues 53–73 (FTTFGAFAALVYGLIAIGGYV). Over 74–82 (GDHLLGTKR) the chain is Cytoplasmic. A helical transmembrane segment spans residues 83–103 (TIVLGAIVLTVGYFMTGLSIL). The Periplasmic portion of the chain corresponds to 104–106 (KPE). A helical membrane pass occupies residues 107-127 (LIFYALGTIAVGNGLFKANPA). Topologically, residues 128–146 (SLLSKCYPPKDPRLDGAFT) are cytoplasmic. A helical transmembrane segment spans residues 147–167 (LFYMSINIGSLFSLAIAPVIA). Topologically, residues 168–171 (EKFG) are periplasmic. A helical membrane pass occupies residues 172–192 (YAVTYNICGIGLIIALLVYVL). At 193 to 212 (YRNTVRNIGSEPDHRPINYK) the chain is on the cytoplasmic side. 2 consecutive transmembrane segments (helical) span residues 213 to 233 (NLLLVLAGTVTMVFVCAWLMH) and 234 to 254 (NVKIANIVLIGLSVVIVFIFF). Residues 255–267 (REAFKQDKVGRNK) lie on the Cytoplasmic side of the membrane. The chain crosses the membrane as a helical span at residues 268-288 (MFVAFILMLQAIVFFILYAQM). Residues 289-311 (PTSLNFFAINNVHHQLLGFNINP) lie on the Periplasmic side of the membrane. A helical membrane pass occupies residues 312–332 (VSFQALNPFWIVVASPILAAL). Over 333–350 (YTHWGSRSKDLTMPAKFT) the chain is Cytoplasmic. A helical transmembrane segment spans residues 351 to 371 (VGMFLCSLGFLTAAAAGLWFA). The Periplasmic segment spans residues 372 to 375 (DEQG). Residues 376–396 (LTSPWFIVLVYLFQSLGELMI) traverse the membrane as a helical segment. The Cytoplasmic portion of the chain corresponds to 397 to 419 (SALGLAMVAALVPQYLMGFILGM). The helical transmembrane segment at 420–440 (WYLTQATSFLLGGYVAAFTAI) threads the bilayer. At 441–456 (PEGITDPLETLPVYTN) the chain is on the periplasmic side. A helical transmembrane segment spans residues 457–477 (VFGKIGITTFIVAIIMAITVP). Residues 478-489 (LLNRMMNGKQKA) are Cytoplasmic-facing.

It belongs to the major facilitator superfamily. Proton-dependent oligopeptide transporter (POT/PTR) (TC 2.A.17) family. DtpB subfamily.

The protein resides in the cell inner membrane. In terms of biological role, proton-dependent permease that transports di- and tripeptides. The polypeptide is Dipeptide and tripeptide permease B (Photorhabdus asymbiotica subsp. asymbiotica (strain ATCC 43949 / 3105-77) (Xenorhabdus luminescens (strain 2))).